The chain runs to 609 residues: Zinc metalloproteinase-disintegrin-like VMP-III (609 aa).

An N-terminal signal peptide occupies residues 1–20 (MIQVLLVTICLAAFPYQGSS). A propeptide spanning residues 21 to 189 (IILESGNVND…KKASQLVVTA (169 aa)) is cleaved from the precursor. In terms of domain architecture, Peptidase M12B spans 198–393 (RFVELFLVVD…HNPECILNEP (196 aa)). Ca(2+) contacts are provided by glutamate 201 and aspartate 285. Disulfide bonds link cysteine 308/cysteine 388, cysteine 348/cysteine 372, and cysteine 350/cysteine 355. Histidine 333 contacts Zn(2+). Glutamate 334 is a catalytic residue. 2 residues coordinate Zn(2+): histidine 337 and histidine 343. A glycan (N-linked (GlcNAc...) asparagine) is linked at asparagine 371. Positions 388, 391, 403, 406, 408, 410, 413, and 416 each coordinate Ca(2+). In terms of domain architecture, Disintegrin spans 401 to 487 (PPVCGNELLE…ECPADVFHKN (87 aa)). 14 disulfide bridges follow: cysteine 404–cysteine 433, cysteine 415–cysteine 428, cysteine 417–cysteine 423, cysteine 427–cysteine 450, cysteine 441–cysteine 447, cysteine 446–cysteine 472, cysteine 459–cysteine 479, cysteine 466–cysteine 498, cysteine 491–cysteine 503, cysteine 510–cysteine 560, cysteine 525–cysteine 571, cysteine 538–cysteine 548, cysteine 555–cysteine 597, and cysteine 591–cysteine 602. The short motif at 465–467 (ECD) is the D/ECD-tripeptide element. Residues aspartate 467, proline 468, glutamate 470, aspartate 482, and valine 483 each coordinate Ca(2+).

Belongs to the venom metalloproteinase (M12B) family. P-III subfamily. P-IIIa sub-subfamily. In terms of assembly, monomer. Zn(2+) is required as a cofactor. As to expression, expressed by the venom gland.

It is found in the secreted. Functionally, snake venom metalloproteinase that impairs hemostasis in the envenomed animal. This chain is Zinc metalloproteinase-disintegrin-like VMP-III, found in Crotalus viridis viridis (Prairie rattlesnake).